The primary structure comprises 763 residues: Amine oxidase [copper-containing] 3 (763 aa).

The Cytoplasmic portion of the chain corresponds to 1–6 (MNQKTT). A helical; Signal-anchor for type II membrane protein membrane pass occupies residues 7-27 (LVLLALAVITIFALVCVLIAG). The Extracellular portion of the chain corresponds to 28 to 763 (RGGDGGEASQ…AFSHGGFFTN (736 aa)). Asparagine 137 carries N-linked (GlcNAc...) asparagine glycosylation. Cysteine 198 and cysteine 199 are joined by a disulfide. Residues asparagine 232 and asparagine 294 are each glycosylated (N-linked (GlcNAc...) asparagine). Aspartate 386 acts as the Proton acceptor in catalysis. A disulfide bridge links cysteine 404 with cysteine 430. Tyrosine 471 functions as the Schiff-base intermediate with substrate; via topaquinone in the catalytic mechanism. Residue tyrosine 471 is modified to 2',4',5'-topaquinone. 2 residues coordinate Cu(2+): histidine 520 and histidine 522. Residues aspartate 529, leucine 530, aspartate 531, and glutamate 572 each coordinate Ca(2+). N-linked (GlcNAc...) asparagine glycosylation is present at asparagine 618. Ca(2+) is bound by residues glutamate 641, phenylalanine 663, and asparagine 665. Asparagine 666 is a glycosylation site (N-linked (GlcNAc...) asparagine). Residues glutamate 667, aspartate 673, and leucine 674 each contribute to the Ca(2+) site. Histidine 684 contacts Cu(2+). Cysteine 734 and cysteine 741 form a disulfide bridge.

It belongs to the copper/topaquinone oxidase family. As to quaternary structure, homodimer; disulfide-linked. Probably forms heterodimers with AOC2. Cu(2+) serves as cofactor. The cofactor is Ca(2+). Requires L-topaquinone as cofactor. Topaquinone (TPQ) is generated by copper-dependent autoxidation of a specific tyrosyl residue. Post-translationally, N- and O-glycosylated.

It localises to the cell membrane. The catalysed reaction is methylamine + O2 + H2O = formaldehyde + H2O2 + NH4(+). The enzyme catalyses benzylamine + O2 + H2O = benzaldehyde + H2O2 + NH4(+). It carries out the reaction 2-phenylethylamine + O2 + H2O = 2-phenylacetaldehyde + H2O2 + NH4(+). In terms of biological role, catalyzes the oxidative deamination of primary amines to the corresponding aldehydes with the concomitant production of hydrogen peroxide and ammonia. Has a preference for the primary monoamines methylamine and benzylamine. Could also act on 2-phenylethylamine but much less efficiently. At endothelial cells surface can also function as a cell adhesion protein that participates in lymphocyte extravasation and recirculation by mediating the binding of lymphocytes to peripheral lymph node vascular endothelial cells in an L-selectin-independent fashion. In Bos taurus (Bovine), this protein is Amine oxidase [copper-containing] 3.